We begin with the raw amino-acid sequence, 770 residues long: uncharacterized protein (770 aa).

Positions 736–770 (GSGQPGQSPANVGDDPNRMVQSSASQTQIGHVFNN) are disordered. Positions 754-770 (MVQSSASQTQIGHVFNN) are enriched in polar residues.

This is an uncharacterized protein from Caenorhabditis elegans.